The chain runs to 23 residues: Cardioactive peptide CAP23 (23 aa).

C7 and C19 are oxidised to a cystine.

Belongs to the GBP/PSP1/paralytic peptide family.

In terms of biological role, has excitatory effects on a semi-isolated heart from larval Manduca sexta, causing an inotropic effect at low concentrations of peptide and chronotropic and inotropic effects at high doses. The protein is Cardioactive peptide CAP23 of Spodoptera eridania (Southern armyworm).